Reading from the N-terminus, the 181-residue chain is ATP synthase subunit delta (181 aa).

This sequence belongs to the ATPase delta chain family. As to quaternary structure, F-type ATPases have 2 components, F(1) - the catalytic core - and F(0) - the membrane proton channel. F(1) has five subunits: alpha(3), beta(3), gamma(1), delta(1), epsilon(1). F(0) has three main subunits: a(1), b(2) and c(10-14). The alpha and beta chains form an alternating ring which encloses part of the gamma chain. F(1) is attached to F(0) by a central stalk formed by the gamma and epsilon chains, while a peripheral stalk is formed by the delta and b chains.

The protein resides in the cell inner membrane. Its function is as follows. F(1)F(0) ATP synthase produces ATP from ADP in the presence of a proton or sodium gradient. F-type ATPases consist of two structural domains, F(1) containing the extramembraneous catalytic core and F(0) containing the membrane proton channel, linked together by a central stalk and a peripheral stalk. During catalysis, ATP synthesis in the catalytic domain of F(1) is coupled via a rotary mechanism of the central stalk subunits to proton translocation. Functionally, this protein is part of the stalk that links CF(0) to CF(1). It either transmits conformational changes from CF(0) to CF(1) or is implicated in proton conduction. This Chlorobium phaeobacteroides (strain DSM 266 / SMG 266 / 2430) protein is ATP synthase subunit delta.